Reading from the N-terminus, the 475-residue chain is MSPKTETKASVGFKAGVKDYRLTYYTPEYQTKDTDILAAFRVTPQPGVPPEEAGAAVAAESSTGTWTTVWTDGLTSLDRYKGRCYDIEPVPGEESQFIAYVAYPLDLFEEGSVTNLFTSIVGNVFGFKALRALRLEDLRIPPAYSKTFQGPPHGIQVERDKLNKYGRPLLGCTIKPKLGLSAKNYGRAVYECLRGGLDFTKDDENVNSQPFMRWRDRFCFCAEALYKAQAETGEIKGHYLNATAGTCEEMMKRAVFARELGVPIVMHDYLTGGFTANTSLAHYCRDNGLLLHIHRAMHAVIDRQRNHGMHFRVLAKALRMSGGDHIHAGTVVGKLEGEREVTLGFVDLLRDDFIEKDRSRGIYFTQDWVSMPGVLPVASGGIHVWHMPALTEIFGDDSVLQFGGGTLGHPWGNAPGAVANRVALEACVQARNEGRDLAREGNQVIREATKWSPELAAACEVWKEIKFEFDTIDRL.

Positions 1–2 (MS) are excised as a propeptide. P3 bears the N-acetylproline mark. K14 is subject to N6,N6,N6-trimethyllysine. Substrate is bound by residues N123 and T173. K175 serves as the catalytic Proton acceptor. K177 contacts substrate. Residues K201, D203, and E204 each contribute to the Mg(2+) site. An N6-carboxylysine modification is found at K201. The active-site Proton acceptor is H294. Substrate contacts are provided by R295, H327, and S379.

The protein belongs to the RuBisCO large chain family. Type I subfamily. In terms of assembly, heterohexadecamer of 8 large chains and 8 small chains; disulfide-linked. The disulfide link is formed within the large subunit homodimers. Mg(2+) is required as a cofactor. Post-translationally, the disulfide bond which can form in the large chain dimeric partners within the hexadecamer appears to be associated with oxidative stress and protein turnover.

It localises to the plastid. Its subcellular location is the chloroplast. The catalysed reaction is 2 (2R)-3-phosphoglycerate + 2 H(+) = D-ribulose 1,5-bisphosphate + CO2 + H2O. It catalyses the reaction D-ribulose 1,5-bisphosphate + O2 = 2-phosphoglycolate + (2R)-3-phosphoglycerate + 2 H(+). Functionally, ruBisCO catalyzes two reactions: the carboxylation of D-ribulose 1,5-bisphosphate, the primary event in carbon dioxide fixation, as well as the oxidative fragmentation of the pentose substrate in the photorespiration process. Both reactions occur simultaneously and in competition at the same active site. This chain is Ribulose bisphosphate carboxylase large chain, found in Cryptomeria japonica (Japanese cedar).